We begin with the raw amino-acid sequence, 205 residues long: Guanylyl cyclase-activating protein 1 (205 aa).

A lipid anchor (N-myristoyl glycine) is attached at Gly2. Asn3 bears the Deamidated asparagine mark. 4 EF-hand domains span residues 30–48 (SGQLTQHEFKQFFGLKNLS), 50–85 (ASNQYIEQMFDTFDFNKDGYMDFMEYVAALSLVLKG), 86–121 (KVEQKLRWYFKLYDVDGNGCIDRGELLNIIKAIRAI), and 129–164 (TAEEFTDMVFDKIDINGDGELSLEEFIEGVQKDELL). The Ca(2+) site is built by Asp63, Asn65, Asp67, Tyr69, Glu74, Asp99, Asp101, Asn103, Cys105, Glu110, Asp142, Asn144, Asp146, Glu148, and Glu153.

Retina.

Regulatory protein that inhibits guanylyl cyclase when free calcium ions concentration is elevated. This Ca(2+)-sensitive regulation of retinal guanylyl cyclase is a key event in recovery of the dark state of rod photoreceptors following light exposure. This chain is Guanylyl cyclase-activating protein 1 (GUCA1A), found in Lithobates pipiens (Northern leopard frog).